Here is a 485-residue protein sequence, read N- to C-terminus: Telomeric DNA-binding factor trf1 (485 aa).

Residues 1-20 are compositionally biased toward basic and acidic residues; that stretch reads MSKRSLDPSDDFKGQKRLAI. Residues 1-23 form a disordered region; that stretch reads MSKRSLDPSDDFKGQKRLAIDPE. Residues 400–457 enclose the HTH myb-type domain; that stretch reads RRVANRRSWTKEEEEALLDGLDLVKGPRWSQILELYGPGGKKSEVLKYRNQVQLKDKA. Positions 428 to 453 form a DNA-binding region, H-T-H motif; the sequence is WSQILELYGPGGKKSEVLKYRNQVQL.

In terms of assembly, homodimer.

The protein localises to the nucleus. Its function is as follows. Binds the telomeric double-stranded TTACAGG repeat and regulates telomere length. In Schizosaccharomyces pombe (strain 972 / ATCC 24843) (Fission yeast), this protein is Telomeric DNA-binding factor trf1 (trf1).